Reading from the N-terminus, the 454-residue chain is Guanine deaminase (454 aa).

H82 and H84 together coordinate Zn(2+). Substrate-binding positions include 84–87 (HAPQ), 213–214 (RF), 240–243 (HISE), and D330. Residues H240 and D330 each coordinate Zn(2+). Residue S453 is modified to Phosphoserine.

The protein belongs to the metallo-dependent hydrolases superfamily. ATZ/TRZ family. In terms of assembly, homodimer. The cofactor is Zn(2+).

It catalyses the reaction guanine + H2O + H(+) = xanthine + NH4(+). It participates in purine metabolism; guanine degradation; xanthine from guanine: step 1/1. Its function is as follows. Catalyzes the hydrolytic deamination of guanine, producing xanthine and ammonia. The chain is Guanine deaminase from Mus musculus (Mouse).